Here is a 680-residue protein sequence, read N- to C-terminus: Translation factor GUF1 homolog, chloroplastic (680 aa).

The transit peptide at 1–51 (MATATASRLAVPAPRTSPQAPGRRRPAAPLPSAPPRPRALSAAPRGRVVCP) directs the protein to the chloroplast. A disordered region spans residues 1–68 (MATATASRLA…ASTTDAGQDR (68 aa)). Over residues 28–37 (APLPSAPPRP) the composition is skewed to pro residues. Low complexity predominate over residues 38–60 (RALSAAPRGRVVCPAAPASSPAS). The tr-type G domain maps to 75-256 (SNIRNFSIIA…AIVTKIPPPQ (182 aa)). GTP is bound by residues 84–91 (AHIDHGKS), 149–153 (DTPGH), and 203–206 (NKID).

It belongs to the TRAFAC class translation factor GTPase superfamily. Classic translation factor GTPase family. LepA subfamily.

The protein localises to the plastid. It is found in the chloroplast. The enzyme catalyses GTP + H2O = GDP + phosphate + H(+). Functionally, promotes chloroplast protein synthesis. May act as a fidelity factor of the translation reaction, by catalyzing a one-codon backward translocation of tRNAs on improperly translocated ribosomes. This Oryza sativa subsp. japonica (Rice) protein is Translation factor GUF1 homolog, chloroplastic.